Reading from the N-terminus, the 237-residue chain is MTEHVVPSDAARELFGETLPVAQRYAELLADVGVARGLIGPREVPRLWERHLMNCAVVEELIPKGADVIDLGSGAGLPGVVLAILRPDLSVTLLEPLLRRTVFLNECVELLRLDNVRVYRGRAEEVHAKLRADIVTARAVAPLPKLIGWALPLLRKGGSLLALKGERAEAELEEARHELARQRPNIADVIRVGGGKVDPATTVVRVTVTTALETGTKAAPSRSPRKPGGRKKRGRKR.

Residues Gly72, Leu77, 123–124 (AE), and Arg138 contribute to the S-adenosyl-L-methionine site. Residues 210-237 (TALETGTKAAPSRSPRKPGGRKKRGRKR) form a disordered region. A compositionally biased stretch (basic residues) spans 223–237 (SPRKPGGRKKRGRKR).

This sequence belongs to the methyltransferase superfamily. RNA methyltransferase RsmG family.

The protein localises to the cytoplasm. Specifically methylates the N7 position of guanine in position 518 of 16S rRNA. This chain is Ribosomal RNA small subunit methyltransferase G, found in Thermobifida fusca (strain YX).